A 460-amino-acid polypeptide reads, in one-letter code: Oxysterols receptor LXR-beta (460 aa).

Residues 1–14 show a composition bias toward low complexity; that stretch reads MSSPTTSSLDTPLP. The disordered stretch occupies residues 1 to 78; it reads MSSPTTSSLD…PERKRKKGPA (78 aa). The transactivation AF-1; required for ligand-independent transactivation function stretch occupies residues 1-85; the sequence is MSSPTTSSLD…GPAPKMLGHE (85 aa). Pro residues predominate over residues 36 to 45; sequence EPWPGGPDPD. The segment at residues 84–161 is a DNA-binding region (nuclear receptor); that stretch reads HELCRVCGDK…AGMREQCVLS (78 aa). 2 NR C4-type zinc fingers span residues 87–107 and 125–149; these read CRVCGDKASGFHYNVLSCEGC and CRGGGTCQMDAFMRRKCQQCRLRKC. A disordered region spans residues 169–216; sequence KIRKQQQESQSQSQSPVGPQGSSSSASGPGASPGGSEAGSQGSGEGEG. Residues 175–198 are compositionally biased toward low complexity; sequence QESQSQSQSPVGPQGSSSSASGPG. The span at 199–215 shows a compositional bias: gly residues; sequence ASPGGSEAGSQGSGEGE. The tract at residues 219–460 is transactivation AF-2; required for ligand-dependent transactivation function; mediates interaction with CCAR2; sequence LTAAQELMIQ…LLSEIWDVHE (242 aa). In terms of domain architecture, NR LBD spans 222 to 460; that stretch reads AQELMIQQLV…LLSEIWDVHE (239 aa). Residues Lys-409 and Lys-447 each participate in a glycyl lysine isopeptide (Lys-Gly) (interchain with G-Cter in SUMO2) cross-link.

Belongs to the nuclear hormone receptor family. NR1 subfamily. Forms a heterodimer with RXR. Interacts with CCAR2 (via N-terminus) in a ligand-independent manner. Interacts (when sumoylated) with GPS2; interaction with GPS2 onto hepatic acute phase protein promoters prevents N-Cor corepressor complex dissociation. Interacts with ABCA12 and ABCA1; this interaction is required for ABCA1 localization to the cell surface and is necessary for its normal activity and stability. In terms of processing, sumoylated by SUMO2 at Lys-409 and Lys-447 during the hepatic acute phase response, leading to promote interaction with GPS2 and prevent N-Cor corepressor complex dissociation. Ubiquitous.

The protein localises to the nucleus. Functionally, nuclear receptor that exhibits a ligand-dependent transcriptional activation activity. Binds preferentially to double-stranded oligonucleotide direct repeats having the consensus half-site sequence 5'-AGGTCA-3' and 4-nt spacing (DR-4). Regulates cholesterol uptake through MYLIP-dependent ubiquitination of LDLR, VLDLR and LRP8; DLDLR and LRP8. Interplays functionally with RORA for the regulation of genes involved in liver metabolism. Induces LPCAT3-dependent phospholipid remodeling in endoplasmic reticulum (ER) membranes of hepatocytes, driving SREBF1 processing and lipogenesis. Via LPCAT3, triggers the incorporation of arachidonate into phosphatidylcholines of ER membranes, increasing membrane dynamics and enabling triacylglycerols transfer to nascent very low-density lipoprotein (VLDL) particles. Via LPCAT3 also counteracts lipid-induced ER stress response and inflammation, likely by modulating SRC kinase membrane compartmentalization and limiting the synthesis of lipid inflammatory mediators. Plays an anti-inflammatory role during the hepatic acute phase response by acting as a corepressor: inhibits the hepatic acute phase response by preventing dissociation of the N-Cor corepressor complex. This is Oxysterols receptor LXR-beta (NR1H2) from Homo sapiens (Human).